The sequence spans 912 residues: Ubiquitin carboxyl-terminal hydrolase 3 (912 aa).

Over residues 1 to 11 (MNMQDANKEES) the composition is skewed to basic and acidic residues. Disordered regions lie at residues 1-30 (MNMQ…TNMQ), 68-176 (IYHQ…SYSS), 241-384 (NSSV…TTAG), and 396-417 (GKSS…YVPP). Low complexity-rich tracts occupy residues 82–95 (NNIN…NNNI), 102–140 (SNGI…SNNH), and 159–176 (TNSS…SYSS). Positions 249–259 (AHHHTKSHSIP) are enriched in basic residues. Residues 260 to 310 (KHNEEVKTETHGEEEDAHDKKPHASKDAHELKKKTEVKKEDAKQDRNEKVI) show a composition bias toward basic and acidic residues. The span at 335-355 (SKTSSPSPSPPAAKSWSAIAS) shows a compositional bias: low complexity. Polar residues-rich tracts occupy residues 361 to 384 (RQAS…TTAG) and 396 to 406 (GKSSSPLLSKQ). In terms of domain architecture, USP spans 460–911 (RGIINRANIC…TAYILMYQKR (452 aa)). Cys-469 serves as the catalytic Nucleophile. The active-site Proton acceptor is the His-861.

It belongs to the peptidase C19 family. In terms of assembly, heterotetramer with BRE5; contains two molecules of BRE5 and two molecules of UBP3. Forms a complex composed of CDC48, DOA1, deubiquitinase UBP3 and probably BRE5. Within the complex interacts directly with DOA1 and CDC48 in a BRE5-independent manner.

It carries out the reaction Thiol-dependent hydrolysis of ester, thioester, amide, peptide and isopeptide bonds formed by the C-terminal Gly of ubiquitin (a 76-residue protein attached to proteins as an intracellular targeting signal).. Functionally, has an ATP-independent isopeptidase activity, cleaving at the C-terminus of the ubiquitin moiety in natural or engineered linear fusion proteins, irrespective of their size or the presence of an N-terminal extension to ubiquitin. Plays a role in regulation of silencing by interacting with SIR4. Also, in conjunction with BRE5, cleaves ubiquitin, leading to the subsequent mono-ubiquitination of SEC23. Required for ribophagy, a process which relocalizes ribosomal particles into the vacuole for degradation in response to starvation. The sequence is that of Ubiquitin carboxyl-terminal hydrolase 3 (UBP3) from Saccharomyces cerevisiae (strain ATCC 204508 / S288c) (Baker's yeast).